A 330-amino-acid chain; its full sequence is Small ribosomal subunit protein uS2 (330 aa).

This sequence belongs to the universal ribosomal protein uS2 family.

In Bradyrhizobium sp. (strain BTAi1 / ATCC BAA-1182), this protein is Small ribosomal subunit protein uS2.